A 616-amino-acid polypeptide reads, in one-letter code: Dihydroxy-acid dehydratase 1 (616 aa).

Asp-81 is a binding site for Mg(2+). Cys-122 serves as a coordination point for [2Fe-2S] cluster. Asp-123 and Lys-124 together coordinate Mg(2+). Lys-124 bears the N6-carboxylysine mark. Cys-195 contacts [2Fe-2S] cluster. Residue Glu-491 coordinates Mg(2+). Ser-517 acts as the Proton acceptor in catalysis.

The protein belongs to the IlvD/Edd family. Homodimer. Requires [2Fe-2S] cluster as cofactor. Mg(2+) serves as cofactor.

It carries out the reaction (2R)-2,3-dihydroxy-3-methylbutanoate = 3-methyl-2-oxobutanoate + H2O. It catalyses the reaction (2R,3R)-2,3-dihydroxy-3-methylpentanoate = (S)-3-methyl-2-oxopentanoate + H2O. The protein operates within amino-acid biosynthesis; L-isoleucine biosynthesis; L-isoleucine from 2-oxobutanoate: step 3/4. It functions in the pathway amino-acid biosynthesis; L-valine biosynthesis; L-valine from pyruvate: step 3/4. Its function is as follows. Functions in the biosynthesis of branched-chain amino acids. Catalyzes the dehydration of (2R,3R)-2,3-dihydroxy-3-methylpentanoate (2,3-dihydroxy-3-methylvalerate) into 2-oxo-3-methylpentanoate (2-oxo-3-methylvalerate) and of (2R)-2,3-dihydroxy-3-methylbutanoate (2,3-dihydroxyisovalerate) into 2-oxo-3-methylbutanoate (2-oxoisovalerate), the penultimate precursor to L-isoleucine and L-valine, respectively. The sequence is that of Dihydroxy-acid dehydratase 1 from Bradyrhizobium diazoefficiens (strain JCM 10833 / BCRC 13528 / IAM 13628 / NBRC 14792 / USDA 110).